A 296-amino-acid chain; its full sequence is Non-homologous end joining protein Ku (296 aa).

The region spanning 11 to 187 is the Ku domain; that stretch reads TFGLVNIPVK…ELPEAGEPSS (177 aa). The disordered stretch occupies residues 254–296; the sequence is AAARRRGDEHEAPARGERRHAAAAAARTTGRPRAARASRKKRG. A compositionally biased stretch (basic and acidic residues) spans 258–273; it reads RRGDEHEAPARGERRH. The span at 275-285 shows a compositional bias: low complexity; that stretch reads AAAAARTTGRP. Basic residues predominate over residues 286 to 296; the sequence is RAARASRKKRG.

Belongs to the prokaryotic Ku family. Homodimer. Interacts with LigD.

With LigD forms a non-homologous end joining (NHEJ) DNA repair enzyme, which repairs dsDNA breaks with reduced fidelity. Binds linear dsDNA with 5'- and 3'- overhangs but not closed circular dsDNA nor ssDNA. Recruits and stimulates the ligase activity of LigD. This chain is Non-homologous end joining protein Ku, found in Anaeromyxobacter sp. (strain K).